The following is a 282-amino-acid chain: Predicted GPI-anchored protein 23 (282 aa).

The first 18 residues, M1–A18, serve as a signal peptide directing secretion. The interval G163–M264 is disordered. N-linked (GlcNAc...) asparagine glycans are attached at residues N180, N192, and N257. Residues G186–S216 are compositionally biased toward gly residues. The segment covering L236–M264 has biased composition (low complexity). S259 is lipidated: GPI-anchor amidated serine. The propeptide at S260–I282 is removed in mature form.

The protein resides in the cell membrane. Its function is as follows. Probable cell surface protein involved in the process of adhesion and early events of invasion. The polypeptide is Predicted GPI-anchored protein 23 (PGA23) (Candida albicans (strain SC5314 / ATCC MYA-2876) (Yeast)).